We begin with the raw amino-acid sequence, 437 residues long: Elongation factor 1-gamma-B (437 aa).

The region spanning 2-87 (AGGTLYTYPD…YVANDELRGS (86 aa)) is the GST N-terminal domain. Residues 89 to 222 (NRLHQAQVIQ…KMAQFDAKKF (134 aa)) enclose the GST C-terminal domain. Residues 225–240 (VQPKKETPKKEKPAKE) show a composition bias toward basic and acidic residues. The tract at residues 225 to 279 (VQPKKETPKKEKPAKEPKKKKKKKKKATPAPAPAPEDDLDESEKALAAEPKSKDP) is disordered. A compositionally biased stretch (basic residues) spans 241–251 (PKKKKKKKKKA). Over residues 266-279 (SEKALAAEPKSKDP) the composition is skewed to basic and acidic residues. The EF-1-gamma C-terminal domain occupies 276–437 (SKDPYAHLPK…KAFNQGKIFK (162 aa)).

EF-1 is composed of four subunits: alpha, beta, delta, and gamma.

In terms of biological role, probably plays a role in anchoring the complex to other cellular components. This Xenopus laevis (African clawed frog) protein is Elongation factor 1-gamma-B (eef1g-b).